The sequence spans 269 residues: Short-chain dehydrogenase/reductase ABA4 (269 aa).

Residues isoleucine 34, aspartate 80, arginine 144, tyrosine 174, lysine 178, isoleucine 207, and threonine 209 each coordinate NADP(+). Tyrosine 174 functions as the Proton donor in the catalytic mechanism. Lysine 178 serves as the catalytic Lowers pKa of active site Tyr.

This sequence belongs to the short-chain dehydrogenases/reductases (SDR) family.

It functions in the pathway hormone biosynthesis. Its function is as follows. Short-chain dehydrogenase/reductase involved in the biosynthesis of abscisic acid (ABA), a phytohormone that acts antagonistically toward salicylic acid (SA), jasmonic acid (JA) and ethylene (ETH) signaling, to impede plant defense responses. During pathogen-host interaction, ABA plays a dual role in disease severity by increasing plant susceptibility and accelerating pathogenesis in the fungus itself. The first step of the pathway catalyzes the reaction from farnesyl diphosphate to alpha-ionylideneethane performed by the alpha-ionylideneethane synthase ABA3 via a three-step reaction mechanism involving 2 neutral intermediates, beta-farnesene and allofarnesene. The cytochrome P450 monooxygenase ABA1 might then be involved in the conversion of alpha-ionylideneethane to alpha-ionylideneacetic acid. Alpha-ionylideneacetic acid is further converted to abscisic acid in 2 steps involving the cytochrome P450 monooxygenase ABA2 and the short-chain dehydrogenase/reductase ABA4, via the intermediates 1'-deoxy-ABA or 1',4'-trans-diol-ABA, depending on the order of action of these 2 enzymes. ABA2 is responsible for the hydroxylation of carbon atom C-1' and ABA4 might be involved in the oxidation of the C-4' carbon atom. In Pyricularia oryzae (strain Y34) (Rice blast fungus), this protein is Short-chain dehydrogenase/reductase ABA4 (ABA4).